Consider the following 246-residue polypeptide: Putative pectinesterase 57 (246 aa).

N-linked (GlcNAc...) asparagine glycans are attached at residues Asn127 and Asn143. A substrate-binding site is contributed by Thr152. N-linked (GlcNAc...) asparagine glycosylation occurs at Asn174. Asp205 (proton donor) is an active-site residue. Asp226 (nucleophile) is an active-site residue.

Belongs to the pectinesterase family.

The catalysed reaction is [(1-&gt;4)-alpha-D-galacturonosyl methyl ester](n) + n H2O = [(1-&gt;4)-alpha-D-galacturonosyl](n) + n methanol + n H(+). Its pathway is glycan metabolism; pectin degradation; 2-dehydro-3-deoxy-D-gluconate from pectin: step 1/5. Acts in the modification of cell walls via demethylesterification of cell wall pectin. The sequence is that of Putative pectinesterase 57 (PME57) from Arabidopsis thaliana (Mouse-ear cress).